Here is a 282-residue protein sequence, read N- to C-terminus: MAPAAYSDLSKASNDLINKDFYHLSTAAVDVKTVAPNGVTFTVKGKTTKDDTISASVDAKYLDKATGLTLTQGWNNANALNTKIELSELLTPGLKGELDTSVVPNGARNAKLNFFYQQSAVNARLFFDLLKGPIATADLVVAHDGFTAGAELGYDISSAKVNKYSVGVGYANLNYGLAATATSNLSVFSAAYFHKVSPLVQVGAKATWDSIKSSNVNVEFATKYALDNTSFIKAKIADSGLTALSYTQELRPGVKLGLGASFDALKLAEPVHKLGFSLSFAA.

It belongs to the eukaryotic mitochondrial porin family.

Its subcellular location is the mitochondrion outer membrane. Functionally, forms a channel through the cell membrane that allows diffusion of small hydrophilic molecules. The channel adopts an open conformation at low or zero membrane potential and a closed conformation at potentials above 30-40 mV. The open state has a weak anion selectivity whereas the closed state is cation-selective. The protein is Mitochondrial outer membrane protein porin (POR1) of Candida albicans (strain SC5314 / ATCC MYA-2876) (Yeast).